The following is an 874-amino-acid chain: Alanine--tRNA ligase (874 aa).

Residues His563, His567, Cys665, and His669 each contribute to the Zn(2+) site.

This sequence belongs to the class-II aminoacyl-tRNA synthetase family. Zn(2+) is required as a cofactor.

It localises to the cytoplasm. The enzyme catalyses tRNA(Ala) + L-alanine + ATP = L-alanyl-tRNA(Ala) + AMP + diphosphate. Its function is as follows. Catalyzes the attachment of alanine to tRNA(Ala) in a two-step reaction: alanine is first activated by ATP to form Ala-AMP and then transferred to the acceptor end of tRNA(Ala). Also edits incorrectly charged Ser-tRNA(Ala) and Gly-tRNA(Ala) via its editing domain. The protein is Alanine--tRNA ligase of Haemophilus ducreyi (strain 35000HP / ATCC 700724).